The chain runs to 143 residues: Large ribosomal subunit protein uL11 (143 aa).

Belongs to the universal ribosomal protein uL11 family. In terms of assembly, part of the ribosomal stalk of the 50S ribosomal subunit. Interacts with L10 and the large rRNA to form the base of the stalk. L10 forms an elongated spine to which L12 dimers bind in a sequential fashion forming a multimeric L10(L12)X complex. One or more lysine residues are methylated.

Its function is as follows. Forms part of the ribosomal stalk which helps the ribosome interact with GTP-bound translation factors. The polypeptide is Large ribosomal subunit protein uL11 (Chromobacterium violaceum (strain ATCC 12472 / DSM 30191 / JCM 1249 / CCUG 213 / NBRC 12614 / NCIMB 9131 / NCTC 9757 / MK)).